Here is a 317-residue protein sequence, read N- to C-terminus: Large ribosomal subunit protein uL10z (317 aa).

It belongs to the universal ribosomal protein uL10 family. In terms of assembly, P0 forms a pentameric complex by interaction with dimers of P1 and P2. Post-translationally, phosphorylated.

Ribosomal protein P0 is the functional equivalent of E.coli protein L10. The chain is Large ribosomal subunit protein uL10z (RPP0A) from Arabidopsis thaliana (Mouse-ear cress).